A 259-amino-acid polypeptide reads, in one-letter code: GTP cyclohydrolase FolE2 (259 aa).

This sequence belongs to the GTP cyclohydrolase IV family.

It catalyses the reaction GTP + H2O = 7,8-dihydroneopterin 3'-triphosphate + formate + H(+). The protein operates within cofactor biosynthesis; 7,8-dihydroneopterin triphosphate biosynthesis; 7,8-dihydroneopterin triphosphate from GTP: step 1/1. Functionally, converts GTP to 7,8-dihydroneopterin triphosphate. The polypeptide is GTP cyclohydrolase FolE2 (Nitratidesulfovibrio vulgaris (strain DSM 19637 / Miyazaki F) (Desulfovibrio vulgaris)).